The primary structure comprises 292 residues: Lipoyl synthase (292 aa).

7 residues coordinate [4Fe-4S] cluster: C38, C43, C49, C64, C68, C71, and S277. Residues 50-266 form the Radical SAM core domain; that stretch reads WSKGTATFLL…REIALDAGFR (217 aa).

Belongs to the radical SAM superfamily. Lipoyl synthase family. [4Fe-4S] cluster serves as cofactor.

Its subcellular location is the cytoplasm. It catalyses the reaction [[Fe-S] cluster scaffold protein carrying a second [4Fe-4S](2+) cluster] + N(6)-octanoyl-L-lysyl-[protein] + 2 oxidized [2Fe-2S]-[ferredoxin] + 2 S-adenosyl-L-methionine + 4 H(+) = [[Fe-S] cluster scaffold protein] + N(6)-[(R)-dihydrolipoyl]-L-lysyl-[protein] + 4 Fe(3+) + 2 hydrogen sulfide + 2 5'-deoxyadenosine + 2 L-methionine + 2 reduced [2Fe-2S]-[ferredoxin]. Its pathway is protein modification; protein lipoylation via endogenous pathway; protein N(6)-(lipoyl)lysine from octanoyl-[acyl-carrier-protein]: step 2/2. In terms of biological role, catalyzes the radical-mediated insertion of two sulfur atoms into the C-6 and C-8 positions of the octanoyl moiety bound to the lipoyl domains of lipoate-dependent enzymes, thereby converting the octanoylated domains into lipoylated derivatives. The sequence is that of Lipoyl synthase from Chlorobaculum parvum (strain DSM 263 / NCIMB 8327) (Chlorobium vibrioforme subsp. thiosulfatophilum).